The chain runs to 256 residues: Pimeloyl-[acyl-carrier protein] methyl ester esterase (256 aa).

The AB hydrolase-1 domain maps to histidine 15–proline 242. Substrate contacts are provided by residues tryptophan 22, serine 82–leucine 83, and phenylalanine 143–glutamine 147. Serine 82 acts as the Nucleophile in catalysis. Catalysis depends on residues aspartate 207 and histidine 235. Histidine 235 is a binding site for substrate.

It belongs to the AB hydrolase superfamily. Carboxylesterase BioH family. As to quaternary structure, monomer.

The protein resides in the cytoplasm. The enzyme catalyses 6-carboxyhexanoyl-[ACP] methyl ester + H2O = 6-carboxyhexanoyl-[ACP] + methanol + H(+). The protein operates within cofactor biosynthesis; biotin biosynthesis. Functionally, the physiological role of BioH is to remove the methyl group introduced by BioC when the pimeloyl moiety is complete. It allows to synthesize pimeloyl-ACP via the fatty acid synthetic pathway through the hydrolysis of the ester bonds of pimeloyl-ACP esters. The polypeptide is Pimeloyl-[acyl-carrier protein] methyl ester esterase (Shigella boydii serotype 4 (strain Sb227)).